We begin with the raw amino-acid sequence, 821 residues long: Lon protease (821 aa).

The Lon N-terminal domain occupies 18-216; that stretch reads LPLMSLREVV…KVYELLQGEI (199 aa). 368–375 contacts ATP; it reads GPPGVGKT. Residues 606 to 787 enclose the Lon proteolytic domain; that stretch reads TSQVGVCTGL…DEVLPQALMA (182 aa). Residues Ser-693 and Lys-736 contribute to the active site.

Belongs to the peptidase S16 family. In terms of assembly, homohexamer. Organized in a ring with a central cavity.

The protein resides in the cytoplasm. It catalyses the reaction Hydrolysis of proteins in presence of ATP.. ATP-dependent serine protease that mediates the selective degradation of mutant and abnormal proteins as well as certain short-lived regulatory proteins. Required for cellular homeostasis and for survival from DNA damage and developmental changes induced by stress. Degrades polypeptides processively to yield small peptide fragments that are 5 to 10 amino acids long. Binds to DNA in a double-stranded, site-specific manner. The protein is Lon protease of Nitratidesulfovibrio vulgaris (strain ATCC 29579 / DSM 644 / CCUG 34227 / NCIMB 8303 / VKM B-1760 / Hildenborough) (Desulfovibrio vulgaris).